A 179-amino-acid polypeptide reads, in one-letter code: Exosome complex component Csl4 (179 aa).

Residues G58–G137 form the S1 motif domain. The Zn(2+) site is built by C143, C146, C159, and C162.

This sequence belongs to the CSL4 family. As to quaternary structure, component of the archaeal exosome complex. Forms a trimer of Rrp4 and/or Csl4 subunits. The trimer associates with a hexameric ring-like arrangement composed of 3 Rrp41-Rrp42 heterodimers. Interacts with DnaG.

It localises to the cytoplasm. In terms of biological role, non-catalytic component of the exosome, which is a complex involved in RNA degradation. Increases the RNA binding and the efficiency of RNA degradation. Helpful for the interaction of the exosome with A-poor RNAs. The sequence is that of Exosome complex component Csl4 from Archaeoglobus fulgidus (strain ATCC 49558 / DSM 4304 / JCM 9628 / NBRC 100126 / VC-16).